The following is a 586-amino-acid chain: Alpha-1,2-mannosyltransferase MNN5 (586 aa).

A signal peptide spans 1–29; that stretch reads MLIRLKKRKILQVIVSAVVLILFFCSVHN. N-linked (GlcNAc...) asparagine glycosylation is found at Asn-113, Asn-136, Asn-259, and Asn-264.

The protein belongs to the MNN1/MNT family. Glycosylated.

The protein resides in the golgi apparatus. It is found in the cis-Golgi network. Its pathway is protein modification; protein glycosylation. Its function is as follows. Responsible for addition of first and second mannose residues to the outer chain of core N-linked polysaccharides and to O-linked mannotriose. Implicated in late Golgi modifications. The sequence is that of Alpha-1,2-mannosyltransferase MNN5 (MNN5) from Saccharomyces cerevisiae (strain YJM789) (Baker's yeast).